Consider the following 333-residue polypeptide: L-lactate dehydrogenase (333 aa).

NAD(+)-binding positions include 29–57 and Arg99; that span reads GQVGMACAYSILQQNLANELCLVDVVADK. Substrate-binding residues include Arg106, Asn138, and Arg169. Position 138 (Asn138) interacts with NAD(+). His193 (proton acceptor) is an active-site residue. Thr249 is a binding site for substrate.

This sequence belongs to the LDH/MDH superfamily. LDH family. As to quaternary structure, homotetramer.

It localises to the cytoplasm. The catalysed reaction is (S)-lactate + NAD(+) = pyruvate + NADH + H(+). The protein operates within fermentation; pyruvate fermentation to lactate; (S)-lactate from pyruvate: step 1/1. The chain is L-lactate dehydrogenase (ldh-1) from Caenorhabditis elegans.